The primary structure comprises 308 residues: Cell division protein FtsX (308 aa).

Topologically, residues 1-24 (MISRFFRHLFEALKSLKRNGWMTV) are cytoplasmic. Residues 25-45 (AAVSSVMITLTLVAIFASVIF) form a helical membrane-spanning segment. Over 46 to 178 (NTAKLATDIE…NTERLFKLAS (133 aa)) the chain is Extracellular. Residues 179–199 (FIRVWGLGIAALLIFIAVFLI) traverse the membrane as a helical segment. Over 200 to 236 (SNTIRITIISRSREIQIMRLVGAKNSYIRGPFLLEGA) the chain is Cytoplasmic. The chain crosses the membrane as a helical span at residues 237 to 257 (FIGLLGAIAPSVLVFIVYQIV). The Extracellular segment spans residues 258–276 (YQSVNKSLVGQNLSMISPD). A helical membrane pass occupies residues 277–297 (LFSPLMIALLFVIGVFIGSLG). At 298 to 308 (SGISMRRFLKI) the chain is on the cytoplasmic side.

It belongs to the ABC-4 integral membrane protein family. FtsX subfamily. In terms of assembly, homodimer. Interacts with FtsE; forms a membrane-associated complex. Interacts (via large extracellular loop) with PcsB (via N-terminal coiled-coil domain). This interaction directs PcsB to equatorial and septal sites of dividing cells.

It is found in the cell membrane. In terms of biological role, part of the ABC transporter FtsEX involved in asymmetric cellular division facilitating the initiation of sporulation. Required in maintaining normal growth and cellular morphology. The sequence is that of Cell division protein FtsX from Streptococcus pneumoniae serotype 2 (strain D39 / NCTC 7466).